Consider the following 419-residue polypeptide: L-rhamnose isomerase (419 aa).

Positions 262, 294, and 296 each coordinate Mn(2+).

It belongs to the rhamnose isomerase family. Homotetramer. Mn(2+) is required as a cofactor.

It localises to the cytoplasm. It carries out the reaction L-rhamnopyranose = L-rhamnulose. The protein operates within carbohydrate degradation; L-rhamnose degradation; glycerone phosphate from L-rhamnose: step 1/3. Functionally, catalyzes the interconversion of L-rhamnose and L-rhamnulose. In Escherichia coli O81 (strain ED1a), this protein is L-rhamnose isomerase.